Reading from the N-terminus, the 570-residue chain is Enhancer of polycomb-like protein 1 (570 aa).

The interval 541–570 (ALNNLNSGQTSGQTMGSNPGPGAIAPTPET) is disordered. A compositionally biased stretch (polar residues) spans 543–557 (NNLNSGQTSGQTMGS).

It belongs to the enhancer of polycomb family. Component of the NuA4 histone acetyltransferase complex.

The protein resides in the nucleus. In terms of biological role, component of the NuA4 histone acetyltransferase complex which is involved in transcriptional activation of selected genes principally by acetylation of nucleosomal histone H4 and H2A. The NuA4 complex is also involved in DNA repair. Involved in gene silencing by neighboring heterochromatin, blockage of the silencing spreading along the chromosome, and required for cell cycle progression through G2/M. The polypeptide is Enhancer of polycomb-like protein 1 (epl1) (Emericella nidulans (strain FGSC A4 / ATCC 38163 / CBS 112.46 / NRRL 194 / M139) (Aspergillus nidulans)).